We begin with the raw amino-acid sequence, 188 residues long: Probable nicotinate-nucleotide adenylyltransferase (188 aa).

The protein belongs to the NadD family.

The enzyme catalyses nicotinate beta-D-ribonucleotide + ATP + H(+) = deamido-NAD(+) + diphosphate. The protein operates within cofactor biosynthesis; NAD(+) biosynthesis; deamido-NAD(+) from nicotinate D-ribonucleotide: step 1/1. Functionally, catalyzes the reversible adenylation of nicotinate mononucleotide (NaMN) to nicotinic acid adenine dinucleotide (NaAD). The polypeptide is Probable nicotinate-nucleotide adenylyltransferase (Salinispora tropica (strain ATCC BAA-916 / DSM 44818 / JCM 13857 / NBRC 105044 / CNB-440)).